The following is a 248-amino-acid chain: MARTFFVGGNFKLNGTKSSIKEIVERLNNAKLDPKVEVVLCPPAPYLDYTVSLVKKSQVSVGAQNAYLKASGAFTGENSVDQIKDVGAKWVILGHSERRQYFREDDQLIAEKTAFALSQGVGVILCIGETLDQKKAGTTLQVVERQLQAVIDKVKDWSNVVIAYEPVWAIGTGLAATPEDAQEIHHSIREFLAKKLGEKTAQETRILYGGSANGKNAVTFKDKPDVDGFLVGGASLKPEFVDIINSRS.

Substrate-binding residues include Asn-10 and Lys-12. The active-site Electrophile is the His-95. The active-site Proton acceptor is the Glu-165.

This sequence belongs to the triosephosphate isomerase family. In terms of assembly, homodimer.

It catalyses the reaction D-glyceraldehyde 3-phosphate = dihydroxyacetone phosphate. It functions in the pathway carbohydrate biosynthesis; gluconeogenesis. The protein operates within carbohydrate degradation; glycolysis; D-glyceraldehyde 3-phosphate from glycerone phosphate: step 1/1. The protein is Triosephosphate isomerase (TPI1) of Zygosaccharomyces bailii.